The sequence spans 596 residues: uncharacterized protein (596 aa).

The N-terminal stretch at M1 to A20 is a signal peptide. Basic and acidic residues-rich tracts occupy residues A25 to T90 and V161 to T184. Positions A25–T184 are disordered. Coiled-coil stretches lie at residues R177–S281 and N318–D454.

The protein belongs to the peptidase M23B family.

This is an uncharacterized protein from Neisseria meningitidis serogroup B (strain ATCC BAA-335 / MC58).